Reading from the N-terminus, the 433-residue chain is SPI-2 type 3 secretion system ATPase (433 aa).

165–170 is a binding site for ATP; the sequence is GVGKST.

Belongs to the ATPase alpha/beta chains family. T3SS ATPase subfamily. In terms of assembly, the core secretion machinery of the T3SS is composed of approximately 20 different proteins, including cytoplasmic components, a base, an export apparatus and a needle. This subunit is part of the cytosolic complex. Forms homohexamers. Forms a complex with SsaK/SctL (stator protein) and SsaQ/SctQ (the major sorting platform component). Interacts with the T3SS-2 specific chaperones SsaE, SseA, SscA, SscB, and SrcA.

It localises to the cytoplasm. It carries out the reaction ATP + H2O + cellular proteinSide 1 = ADP + phosphate + cellular proteinSide 2.. In terms of biological role, ATPase component of the type III secretion system (T3SS), also called injectisome, which is used to inject bacterial effector proteins into eukaryotic host cells. Acts as a molecular motor to provide the energy that is required for the export of proteins. Required for type III secretion apparatus (T3SA) formation, secretion of a subset of SPI-2 effectors and virulence. May play a critical role in T3SS substrate recognition, disassembly of the effector/chaperone complex and unfolding of the effector in an ATP-dependent manner prior to secretion. Releases the effector protein SseB from the T3SS-2 specific chaperone SsaE in an ATP-dependent manner. The sequence is that of SPI-2 type 3 secretion system ATPase from Salmonella typhimurium (strain LT2 / SGSC1412 / ATCC 700720).